A 1221-amino-acid polypeptide reads, in one-letter code: RNA exonuclease 1 homolog (1221 aa).

Positions 37 to 46 (RGSGAPGDGG) are enriched in gly residues. The disordered stretch occupies residues 37–75 (RGSGAPGDGGEAPPAAGLGYDPYNPELPKPPAQRENGTL). The stretch at 86–115 (LELELVNQAIEAVRSEVELEQRRYRELLET) forms a coiled coil. Positions 116–598 (TREHRSAEAP…STSSAGADVD (483 aa)) are disordered. R191 is modified (omega-N-methylarginine). Phosphoserine occurs at positions 287, 289, and 358. Over residues 357-369 (ASPAQVQSSQDGG) the composition is skewed to low complexity. The segment covering 393–417 (AQGKDKTKDKGRGRPVEKPRADKKG) has biased composition (basic and acidic residues). Phosphoserine occurs at positions 459, 499, and 526. The segment covering 492-501 (LVERKARSLD) has biased composition (basic and acidic residues). The interval 498–577 (RSLDEGASQD…KRLKASPPPS (80 aa)) is interaction with ELOA. The segment covering 580 to 593 (PSSSSSSSSSTSSA) has biased composition (low complexity). S610 carries the phosphoserine modification. 2 disordered regions span residues 619-692 (IFNE…TAQE) and 735-775 (HIPN…TRTL). The segment covering 627–648 (KTEDRGRLARQPPKEEKSEEKG) has biased composition (basic and acidic residues). S914 bears the Phosphoserine mark. Positions 1060 to 1209 (IYALDCEMSY…EDAGACMHLV (150 aa)) constitute an Exonuclease domain.

This sequence belongs to the REXO1/REXO3 family. As to quaternary structure, interacts with TCEA2 and ELOA. In terms of tissue distribution, ubiquitously expressed.

Its subcellular location is the nucleus. Its function is as follows. Seems to have no detectable effect on transcription elongation in vitro. This chain is RNA exonuclease 1 homolog (REXO1), found in Homo sapiens (Human).